We begin with the raw amino-acid sequence, 318 residues long: NADH-ubiquinone oxidoreductase chain 1 (318 aa).

8 helical membrane passes run 2 to 22 (FLMN…FLTL), 68 to 88 (ISLF…MWIP), 102 to 122 (ILFI…SGWA), 146 to 166 (LAII…SSLI), 171 to 191 (FTWL…STLA), 217 to 237 (AGPF…MNAL), 253 to 273 (EMFT…FLWI), and 294 to 314 (LPLT…MACI).

Belongs to the complex I subunit 1 family.

It is found in the mitochondrion inner membrane. It catalyses the reaction a ubiquinone + NADH + 5 H(+)(in) = a ubiquinol + NAD(+) + 4 H(+)(out). Functionally, core subunit of the mitochondrial membrane respiratory chain NADH dehydrogenase (Complex I) that is believed to belong to the minimal assembly required for catalysis. Complex I functions in the transfer of electrons from NADH to the respiratory chain. The immediate electron acceptor for the enzyme is believed to be ubiquinone. The protein is NADH-ubiquinone oxidoreductase chain 1 (MT-ND1) of Tamias sibiricus (Siberian chipmunk).